A 183-amino-acid polypeptide reads, in one-letter code: ATP synthase subunit b, chloroplastic (183 aa).

A helical transmembrane segment spans residues 25-45; that stretch reads DILATNLINLTVVVGVLIFFG.

The protein belongs to the ATPase B chain family. F-type ATPases have 2 components, F(1) - the catalytic core - and F(0) - the membrane proton channel. F(1) has five subunits: alpha(3), beta(3), gamma(1), delta(1), epsilon(1). F(0) has four main subunits: a(1), b(1), b'(1) and c(10-14). The alpha and beta chains form an alternating ring which encloses part of the gamma chain. F(1) is attached to F(0) by a central stalk formed by the gamma and epsilon chains, while a peripheral stalk is formed by the delta, b and b' chains.

The protein resides in the plastid. It localises to the chloroplast thylakoid membrane. In terms of biological role, f(1)F(0) ATP synthase produces ATP from ADP in the presence of a proton or sodium gradient. F-type ATPases consist of two structural domains, F(1) containing the extramembraneous catalytic core and F(0) containing the membrane proton channel, linked together by a central stalk and a peripheral stalk. During catalysis, ATP synthesis in the catalytic domain of F(1) is coupled via a rotary mechanism of the central stalk subunits to proton translocation. Functionally, component of the F(0) channel, it forms part of the peripheral stalk, linking F(1) to F(0). This Saccharum hybrid (Sugarcane) protein is ATP synthase subunit b, chloroplastic.